The primary structure comprises 657 residues: Methionine--tRNA ligase (657 aa).

The short motif at 13 to 23 (YYPSGNLHIGH) is the 'HIGH' region element. A 'KMSKS' region motif is present at residues 308–312 (KMSKS). Lys311 lines the ATP pocket. A tRNA-binding domain is found at 557–657 (DFDKVEIKAA…SAIPNGAVIK (101 aa)).

Belongs to the class-I aminoacyl-tRNA synthetase family. MetG type 2B subfamily. As to quaternary structure, homodimer.

It localises to the cytoplasm. The enzyme catalyses tRNA(Met) + L-methionine + ATP = L-methionyl-tRNA(Met) + AMP + diphosphate. Is required not only for elongation of protein synthesis but also for the initiation of all mRNA translation through initiator tRNA(fMet) aminoacylation. The chain is Methionine--tRNA ligase from Staphylococcus aureus (strain MW2).